The chain runs to 1637 residues: MAGQGDCCVKVAVRIRPQLSKEKIEGCHICTSVTPGEPQVLLGKDKAFTYDFVFDLDTWQEQIYSTCVSKLIEGCFEGYNATVLAYGQTGAGKTYTMGTGFDMATSEEEQGIIPRAIAHLFGGIAERKRRAQEQGVAGPEFKVSAQFLELYNEEILDLFDSTRDPDTRHRRSNIKIHEDANGGIYTTGVTSRLIHSQEELIQCLKQGALSRTTASTQMNVQSSRSHAIFTIHLCQMRMCTQPDLVNEAVTGLPDGTPPSSEYETLTAKFHFVDLAGSERLKRTGATGERAKEGISINCGLLALGNVISALGDQSKKVVHVPYRDSKLTRLLQDSLGGNSQTIMIACVSPSDRDFMETLNTLKYANRARNIKNKVVVNQDKTSQQISALRAEIARLQMELMEYKAGKRVIGEDGAEGYSDLFRENAMLQKENGALRLRVKAMQEAIDAINNRVTQLMSQEANLLLAKAGDGNEAIGALIQNYIREIEELRTKLLESEAMNESLRRSLSRASARSPYSLGASPAAPAFGGSPASSMEDASEVIRRAKQDLERLKKKEVRQRRKSPEKEAFKKRAKLQQENSEETDENEAEEEEEERDESGCEEEEGREDEDEDSGSEESLVDSDSDPEEKEVNFQADLADLTCEIEIKQKLIDELENSQRRLQTLKHQYEEKLILLQNKIRDTQLERDRVLQNLSTMECYTEEKANKIKADYEKRLREMNRDLQKLQAAQKEHARLLKNQSRYERELKKLQAEVAEMKKAKVALMKQMREEQQRRRLVETKRNREIAQLKKEQRRQEFQIRALESQKRQQEMVLRRKTQEVSALRRLAKPMSERVAGRAGLKPPMLDSGAEVSASTTSSEAESGARSVSSIVRQWNRKINHFLGDHPAPTVNGTRPARKKFQKKGASQSFSKAARLKWQSLERRIIDIVMQRMTIVNLEADMERLIKKREELFLLQEALRRKRERLQAESPEEEKGLQELAEEIEVLAANIDYINDGITDCQATIVQLEETKEELDSTDTSVVISSCSLAEARLLLDNFLKASIDKGLQVAQKEAQIRLLEGRLRQTDMAGSSQNHLLLDALREKAEAHPELQALIYNVQQENGYASTDEEISEFSEGSFSQSFTMKGSTSHDDFKFKSEPKLSAQMKAVSAECLGPPLDISTKNITKSLASLVEIKEDGVGFSVRDPYYRDRVSRTVSLPTRGSTFPRQSRATETSPLTRRKSYDRGQPIRSTDVGFTPPSSPPTRPRNDRNVFSRLTSNQSQGSALDKSDDSDSSLSEVLRGIISPVGGAKGARTAPLQCVSMAEGHTKPILCLDATDELLFTGSKDRSCKMWNLVTGQEIAALKGHPNNVVSIKYCSHSGLVFSVSTSYIKVWDIRDSAKCIRTLTSSGQVISGDACAATSTRAITSAQGEHQINQIALSPSGTMLYAASGNAVRIWELSRFQPVGKLTGHIGPVMCLTVTQTASQHDLVVTGSKDHYVKMFELGECVTGTIGPTHNFEPPHYDGIECLAIQGDILFSGSRDNGIKKWDLDQQELIQQIPNAHKDWVCALAFIPGRPMLLSACRAGVIKVWNVDNFTPIGEIKGHDSPINAICTNAKHIFTASSDCRVKLWNYVPGLTPCLPRRVLAIKGRATTLP.

The Kinesin motor domain occupies 8–370 (CVKVAVRIRP…LKYANRARNI (363 aa)). 87–94 (GQTGAGKT) is an ATP binding site. Coiled coils occupy residues 376-604 (VNQD…EEEG) and 631-824 (NFQA…ALRR). The interval 400–1099 (MEYKAGKRVI…LQALIYNVQQ (700 aa)) is interaction with TRIM3. Over residues 509–533 (ASARSPYSLGASPAAPAFGGSPASS) the composition is skewed to low complexity. 2 disordered regions span residues 509–538 (ASARSPYSLGASPAAPAFGGSPASSMEDAS) and 552–628 (KKKE…PEEK). A compositionally biased stretch (acidic residues) spans 578 to 627 (NSEETDENEAEEEEEERDESGCEEEEGREDEDEDSGSEESLVDSDSDPEE). S579 carries the phosphoserine modification. T582 carries the phosphothreonine modification. Disordered stretches follow at residues 830–865 (SERVAGRAGLKPPMLDSGAEVSASTTSSEAESGARS) and 880–906 (FLGDHPAPTVNGTRPARKKFQKKGASQ). A compositionally biased stretch (low complexity) spans 846–865 (SGAEVSASTTSSEAESGARS). Positions 928-1016 (MQRMTIVNLE…EETKEELDST (89 aa)) form a coiled coil. Residues S1149, S1167, and S1215 each carry the phosphoserine modification. Residues 1194–1217 (RTVSLPTRGSTFPRQSRATETSPL) are compositionally biased toward polar residues. Residues 1194–1251 (RTVSLPTRGSTFPRQSRATETSPLTRRKSYDRGQPIRSTDVGFTPPSSPPTRPRNDRN) are disordered. T1237 is subject to Phosphothreonine. At S1241 the chain carries Phosphoserine. WD repeat units lie at residues 1306–1343 (GHTKPILCLDATDELLFTGSKDRSCKMWNLVTGQEIAA), 1346–1384 (GHPNNVVSIKYCSHSGLVFSVSTSYIKVWDIRDSAKCIR), 1410–1448 (QGEHQINQIALSPSGTMLYAASGNAVRIWELSRFQPVGK), 1451–1493 (GHIG…TGTI), 1502–1539 (PHYDGIECLAIQGDILFSGSRDNGIKKWDLDQQELIQQ), 1543–1582 (AHKDWVCALAFIPGRPMLLSACRAGVIKVWNVDNFTPIGE), and 1585–1622 (GHDSPINAICTNAKHIFTASSDCRVKLWNYVPGLTPCL).

Belongs to the TRAFAC class myosin-kinesin ATPase superfamily. Kinesin family. Interacts with TRIM3; the interaction positively affects motility of KIF21B. Interacts with GABARAP and GABA(A) receptor subunits: GABRG2, GABRA1 and GABRA2. May interact with GABA(A) receptor subunits: GABRB2 and GABRB3.

The protein localises to the cytoplasm. It localises to the cytoskeleton. Its subcellular location is the cell projection. It is found in the dendrite. The protein resides in the growth cone. The protein localises to the axon. It localises to the cytoplasmic vesicle. Its function is as follows. Plus-end directed microtubule-dependent motor protein which displays processive activity. Is involved in regulation of microtubule dynamics, synapse function and neuronal morphology, including dendritic tree branching and spine formation. Plays a role in lerning and memory. Involved in delivery of gamma-aminobutyric acid (GABA(A)) receptor to cell surface. This is Kinesin-like protein KIF21B (KIF21B) from Homo sapiens (Human).